The primary structure comprises 179 residues: Ribosome maturation factor RimM (179 aa).

In terms of domain architecture, PRC barrel spans 96–179 (DNEFYWVDLI…KITVDWGLDY (84 aa)).

This sequence belongs to the RimM family. Binds ribosomal protein uS19.

Its subcellular location is the cytoplasm. Functionally, an accessory protein needed during the final step in the assembly of 30S ribosomal subunit, possibly for assembly of the head region. Essential for efficient processing of 16S rRNA. May be needed both before and after RbfA during the maturation of 16S rRNA. It has affinity for free ribosomal 30S subunits but not for 70S ribosomes. The chain is Ribosome maturation factor RimM from Janthinobacterium sp. (strain Marseille) (Minibacterium massiliensis).